Reading from the N-terminus, the 120-residue chain is Aspartate 1-decarboxylase (120 aa).

Serine 25 (schiff-base intermediate with substrate; via pyruvic acid) is an active-site residue. Serine 25 carries the post-translational modification Pyruvic acid (Ser). Threonine 57 lines the substrate pocket. Catalysis depends on tyrosine 58, which acts as the Proton donor. A substrate-binding site is contributed by 73 to 75 (GAA).

This sequence belongs to the PanD family. As to quaternary structure, heterooctamer of four alpha and four beta subunits. The cofactor is pyruvate. In terms of processing, is synthesized initially as an inactive proenzyme, which is activated by self-cleavage at a specific serine bond to produce a beta-subunit with a hydroxyl group at its C-terminus and an alpha-subunit with a pyruvoyl group at its N-terminus.

It is found in the cytoplasm. The enzyme catalyses L-aspartate + H(+) = beta-alanine + CO2. It participates in cofactor biosynthesis; (R)-pantothenate biosynthesis; beta-alanine from L-aspartate: step 1/1. In terms of biological role, catalyzes the pyruvoyl-dependent decarboxylation of aspartate to produce beta-alanine. This is Aspartate 1-decarboxylase from Deinococcus geothermalis (strain DSM 11300 / CIP 105573 / AG-3a).